The chain runs to 244 residues: Phosphoadenosine 5'-phosphosulfate reductase (244 aa).

Catalysis depends on Cys-239, which acts as the Nucleophile; cysteine thiosulfonate intermediate.

It belongs to the PAPS reductase family. CysH subfamily.

Its subcellular location is the cytoplasm. It catalyses the reaction [thioredoxin]-disulfide + sulfite + adenosine 3',5'-bisphosphate + 2 H(+) = [thioredoxin]-dithiol + 3'-phosphoadenylyl sulfate. Its pathway is sulfur metabolism; hydrogen sulfide biosynthesis; sulfite from sulfate: step 3/3. In terms of biological role, catalyzes the formation of sulfite from phosphoadenosine 5'-phosphosulfate (PAPS) using thioredoxin as an electron donor. The polypeptide is Phosphoadenosine 5'-phosphosulfate reductase (Escherichia coli O157:H7).